The following is a 152-amino-acid chain: Regulatory protein RecX (152 aa).

Belongs to the RecX family.

The protein resides in the cytoplasm. In terms of biological role, modulates RecA activity. This Chromobacterium violaceum (strain ATCC 12472 / DSM 30191 / JCM 1249 / CCUG 213 / NBRC 12614 / NCIMB 9131 / NCTC 9757 / MK) protein is Regulatory protein RecX.